Reading from the N-terminus, the 483-residue chain is tRNA sulfurtransferase (483 aa).

In terms of domain architecture, THUMP spans 61 to 165 (AEVLEILTTT…DELLNQVIAR (105 aa)). ATP is bound by residues 183–184 (LI), K265, G287, and Q296. A disulfide bond links C344 and C457. A Rhodanese domain is found at 405–483 (EEGNAVVLDI…GFNNVKVYRP (79 aa)). Residue C457 is the Cysteine persulfide intermediate of the active site.

This sequence belongs to the ThiI family.

Its subcellular location is the cytoplasm. The catalysed reaction is [ThiI sulfur-carrier protein]-S-sulfanyl-L-cysteine + a uridine in tRNA + 2 reduced [2Fe-2S]-[ferredoxin] + ATP + H(+) = [ThiI sulfur-carrier protein]-L-cysteine + a 4-thiouridine in tRNA + 2 oxidized [2Fe-2S]-[ferredoxin] + AMP + diphosphate. It catalyses the reaction [ThiS sulfur-carrier protein]-C-terminal Gly-Gly-AMP + S-sulfanyl-L-cysteinyl-[cysteine desulfurase] + AH2 = [ThiS sulfur-carrier protein]-C-terminal-Gly-aminoethanethioate + L-cysteinyl-[cysteine desulfurase] + A + AMP + 2 H(+). It functions in the pathway cofactor biosynthesis; thiamine diphosphate biosynthesis. Catalyzes the ATP-dependent transfer of a sulfur to tRNA to produce 4-thiouridine in position 8 of tRNAs, which functions as a near-UV photosensor. Also catalyzes the transfer of sulfur to the sulfur carrier protein ThiS, forming ThiS-thiocarboxylate. This is a step in the synthesis of thiazole, in the thiamine biosynthesis pathway. The sulfur is donated as persulfide by IscS. The sequence is that of tRNA sulfurtransferase from Vibrio cholerae serotype O1 (strain ATCC 39315 / El Tor Inaba N16961).